The chain runs to 209 residues: UPF0319 protein VFMJ11_1730 (209 aa).

The N-terminal stretch at 1–21 is a signal peptide; it reads MKIQSIFAASFCLLSSISAHA.

This sequence belongs to the UPF0319 family.

The polypeptide is UPF0319 protein VFMJ11_1730 (Aliivibrio fischeri (strain MJ11) (Vibrio fischeri)).